The following is a 925-amino-acid chain: Nonribosomal peptide synthetase apvA (925 aa).

Positions Ala-15 to Ile-436 are adenylation (A) domain. The Carrier domain occupies Glu-564–Gln-644. O-(pantetheine 4'-phosphoryl)serine is present on Ser-601. The interval Pro-663–Val-909 is thioesterase (TE) domain.

Belongs to the NRP synthetase family. In terms of tissue distribution, apvA specifically produces aspulvinone E in hyphea, in contrast to melA which produces aspulvinone E in conidia where it is converted to UV-protective Asp-melanin.

It catalyses the reaction 2 3-(4-hydroxyphenyl)pyruvate + AH2 + 2 ATP + O2 = aspulvinone E + A + 2 AMP + CO2 + 2 diphosphate + H2O + H(+). It participates in secondary metabolite biosynthesis. Functionally, nonribosomal peptide synthetase; part of the gene cluster that mediates the biosynthesis of aspulvinones. The nonribosomal peptide synthetase apvA is responsible for the production of aspulvinone E, the core structure of aspulvinones. ApvA first activates 4-hydroxyphenylpyruvate (HPPA) through its A domain to AMP-HPPA. The HPPA unit is then loaded to the T domain and eventually transferred to the TE domain. Upon loading of another HPPA unit to the T domain, the TE domain promotes the enolate formation on the unit attached. The next step involves head to tail Claisen condensation, followed by the keto-enol tautermerization and a nucleophilic attack on the carbonyl carbon to yield the furanone partial structure. A spontaneous oxidation at the beta-carbon of the thioester might occur in aerobic condition. The TE domain then catalyzes the hydrolysis of the thioester, followed by spontaneous decarboxylation, dehydroxylation and keto-enol tautermerization to give the aspulvinone core. Aspulvinone E is highly unstable and converted to isoaspulvinone E in the presence of light. The structural diversity of the aspulvinones suggests that other tailoring enzymes are involved and have still to be identified. This is Nonribosomal peptide synthetase apvA from Aspergillus terreus (strain NIH 2624 / FGSC A1156).